Reading from the N-terminus, the 167-residue chain is EF-hand calcium-binding domain-containing protein 11 (167 aa).

EF-hand domains lie at 17–52 (AERKKIELVFHQCDVDKKGYMSREDLKIAVVMLFGY), 91–126 (DPYEKARQIFSAFDVHCRGFLKLDDFKSAFKRVAPR), and 127–162 (LQERTVLEAFRHADQDSDGHISFKDFENIISYGLAN). Ca(2+)-binding residues include aspartate 140, aspartate 142, aspartate 144, histidine 146, and aspartate 151.

The polypeptide is EF-hand calcium-binding domain-containing protein 11 (efcab11) (Danio rerio (Zebrafish)).